A 290-amino-acid polypeptide reads, in one-letter code: Nucleoid occlusion protein (290 aa).

The H-T-H motif DNA-binding region spans 153 to 172 (EALAQRLGKGQSTVANKLRL).

This sequence belongs to the ParB family.

It localises to the cytoplasm. The protein resides in the nucleoid. Effects nucleoid occlusion by binding relatively nonspecifically to DNA and preventing the assembly of the division machinery in the vicinity of the nucleoid, especially under conditions that disturb the cell cycle. It helps to coordinate cell division and chromosome segregation by preventing the formation of the Z ring through the nucleoid, which would cause chromosome breakage. This is Nucleoid occlusion protein from Bacillus mycoides (strain KBAB4) (Bacillus weihenstephanensis).